The following is a 399-amino-acid chain: Enoyl-[acyl-carrier-protein] reductase [NADH] (399 aa).

NAD(+) contacts are provided by residues 49–54, 75–76, 112–113, and 141–142; these read GASSGY, FE, DA, and LA. Tyr227 contributes to the substrate binding site. Residue Tyr237 is the Proton donor of the active site. NAD(+)-binding positions include Lys246 and 272 to 274; that span reads VVT.

This sequence belongs to the TER reductase family. Monomer.

The catalysed reaction is a 2,3-saturated acyl-[ACP] + NAD(+) = a (2E)-enoyl-[ACP] + NADH + H(+). It functions in the pathway lipid metabolism; fatty acid biosynthesis. Involved in the final reduction of the elongation cycle of fatty acid synthesis (FAS II). Catalyzes the reduction of a carbon-carbon double bond in an enoyl moiety that is covalently linked to an acyl carrier protein (ACP). This is Enoyl-[acyl-carrier-protein] reductase [NADH] from Pseudomonas putida (strain W619).